Reading from the N-terminus, the 248-residue chain is Small ribosomal subunit protein uS2 (248 aa).

The protein belongs to the universal ribosomal protein uS2 family.

This is Small ribosomal subunit protein uS2 from Cupriavidus necator (strain ATCC 17699 / DSM 428 / KCTC 22496 / NCIMB 10442 / H16 / Stanier 337) (Ralstonia eutropha).